Here is a 688-residue protein sequence, read N- to C-terminus: Potassium-transporting ATPase ATP-binding subunit (688 aa).

The next 4 membrane-spanning stretches (helical) occupy residues 37 to 57, 65 to 85, 219 to 239, and 262 to 282; these read FLVY…LVGI, ILGI…AEAI, IALQ…TVSL, and VALL…SIGI. D313 serves as the catalytic 4-aspartylphosphate intermediate. ATP contacts are provided by residues D350, E354, 383-390, and K401; that span reads FTAKTRMS. Mg(2+) contacts are provided by D524 and D528. 3 consecutive transmembrane segments (helical) span residues 594 to 614, 622 to 642, and 668 to 688; these read FAII…LNIM, AIFS…PLAL, and IIVP…IGIV.

Belongs to the cation transport ATPase (P-type) (TC 3.A.3) family. Type IA subfamily. As to quaternary structure, the system is composed of three essential subunits: KdpA, KdpB and KdpC.

It localises to the cell membrane. It catalyses the reaction K(+)(out) + ATP + H2O = K(+)(in) + ADP + phosphate + H(+). Its function is as follows. Part of the high-affinity ATP-driven potassium transport (or Kdp) system, which catalyzes the hydrolysis of ATP coupled with the electrogenic transport of potassium into the cytoplasm. This subunit is responsible for energy coupling to the transport system and for the release of the potassium ions to the cytoplasm. The protein is Potassium-transporting ATPase ATP-binding subunit of Clostridium botulinum (strain Alaska E43 / Type E3).